The chain runs to 132 residues: ATP synthase epsilon chain (132 aa).

Belongs to the ATPase epsilon chain family. In terms of assembly, F-type ATPases have 2 components, CF(1) - the catalytic core - and CF(0) - the membrane proton channel. CF(1) has five subunits: alpha(3), beta(3), gamma(1), delta(1), epsilon(1). CF(0) has three main subunits: a, b and c.

It is found in the cell membrane. Its function is as follows. Produces ATP from ADP in the presence of a proton gradient across the membrane. The chain is ATP synthase epsilon chain from Desulfitobacterium hafniense (strain DSM 10664 / DCB-2).